A 1073-amino-acid chain; its full sequence is Probable lipase MIL1 (1073 aa).

2 disordered regions span residues 1–151 and 163–190; these read MSDS…AVSS and LTSK…KSVN. Basic and acidic residues-rich tracts occupy residues 54 to 81 and 101 to 121; these read QAKE…EAGK and GIDR…HDTD. Residues 143 to 147 carry the APM2-interacting WQEMP motif motif; that stretch reads WQEMP. N190, N229, and N236 each carry an N-linked (GlcNAc...) asparagine glycan. Residues 230 to 267 are disordered; sequence SSQTSVNLTSSPSTTSLNNEKNNDDDDDDSYDEYEDDV. Residues 233 to 249 are compositionally biased toward low complexity; that stretch reads TSVNLTSSPSTTSLNNE. Positions 252–267 are enriched in acidic residues; that stretch reads NDDDDDDSYDEYEDDV. A glycan (N-linked (GlcNAc...) asparagine) is linked at N280. Residues 292–312 form a helical membrane-spanning segment; the sequence is FAYVGAINILANQMCTNLATL. The interval 385 to 448 is disordered; that stretch reads NPWENDRDHE…SDVPGKVLDP (64 aa). Over residues 404 to 427 the composition is skewed to polar residues; it reads RMSPNEQNGSVQASTPDPEQSATP. N411 carries an N-linked (GlcNAc...) asparagine glycan. S435 carries the post-translational modification Phosphoserine. The chain crosses the membrane as a helical span at residues 457 to 477; it reads LNIDVAWTIICDLFLICLQSS. N495 is a glycosylation site (N-linked (GlcNAc...) asparagine). 2 helical membrane-spanning segments follow: residues 553–573 and 577–597; these read LVLG…IAAG and IGIT…VVAV. N-linked (GlcNAc...) asparagine glycosylation occurs at N726. Residues 818–838 form a helical membrane-spanning segment; it reads WFLAYLFRAAAGGFSAVMGIS. An N-linked (GlcNAc...) asparagine glycan is attached at N850. Disordered regions lie at residues 942–968 and 1010–1073; these read GRDM…EGIA and KEVE…PDDI. The segment covering 1027-1037 has biased composition (pro residues); sequence PSTPKINPPQS. The residue at position 1037 (S1037) is a Phosphoserine.

This sequence belongs to the TMCO4 family. As to quaternary structure, interacts with RPP0. Interacts with APM2.

The protein localises to the golgi apparatus membrane. Its subcellular location is the early endosome membrane. It is found in the cytoplasmic vesicle. The protein resides in the clathrin-coated vesicle membrane. In terms of biological role, probable lipase that recruits the AP-1-related (AP-1R) complex to membranes via interaction with APM2. The AP-1R complex is an adapter protein complex that mediates of cargo protein SNC1 sorting in clathrin-coated vesicles. The polypeptide is Probable lipase MIL1 (Saccharomyces cerevisiae (strain ATCC 204508 / S288c) (Baker's yeast)).